We begin with the raw amino-acid sequence, 368 residues long: Chaperone protein DnaJ (368 aa).

A J domain is found at 5-69; sequence DYYEVLGVAR…NQRARYDQFG (65 aa). The CR-type zinc-finger motif lies at 125–207; the sequence is GVEKVITIPV…CRGAGRVRKN (83 aa). Zn(2+) is bound by residues cysteine 138, cysteine 141, cysteine 155, cysteine 158, cysteine 181, cysteine 184, cysteine 195, and cysteine 198. CXXCXGXG motif repeat units follow at residues 138 to 145, 155 to 162, 181 to 188, and 195 to 202; these read CGTCHGSG, CKRCGGSG, CSTCHGRG, and CETCRGAG.

This sequence belongs to the DnaJ family. As to quaternary structure, homodimer. Requires Zn(2+) as cofactor.

Its subcellular location is the cytoplasm. Its function is as follows. Participates actively in the response to hyperosmotic and heat shock by preventing the aggregation of stress-denatured proteins and by disaggregating proteins, also in an autonomous, DnaK-independent fashion. Unfolded proteins bind initially to DnaJ; upon interaction with the DnaJ-bound protein, DnaK hydrolyzes its bound ATP, resulting in the formation of a stable complex. GrpE releases ADP from DnaK; ATP binding to DnaK triggers the release of the substrate protein, thus completing the reaction cycle. Several rounds of ATP-dependent interactions between DnaJ, DnaK and GrpE are required for fully efficient folding. Also involved, together with DnaK and GrpE, in the DNA replication of plasmids through activation of initiation proteins. The polypeptide is Chaperone protein DnaJ (Exiguobacterium sibiricum (strain DSM 17290 / CCUG 55495 / CIP 109462 / JCM 13490 / 255-15)).